The following is a 408-amino-acid chain: MPGIAIIGAQWGDEGKGKVVDVLAREADYVIRYQGGANAGHTVVAEGKVFKLNLLPSGVIHPHAVNVLGDGMVIDPFRFQEEVEGLRKEGFDPKILVSERAHLVLPHHKHVESRHNFVGTTGRGIGPAYSDRARRVGIRAGDLLDEATLRERVRRLLAEKPNSTREAGWDTEEKALADLHRMREILSPYIADTGSLLREAWRKGKRLLFEGAQATLLDLNYGTYPYVTSSHPTVGGILVGTGLSHKAITKVYGVAKAYTTRVGEGPFPTELQGELAHHLREKGGEYGTTTGRPRRVGWLDLVALRYACEVNGFDGLVLTKLDVLSGLEKVKVAVEYLDGARPGEASPEAVRYLELPGWGDLSHVKRREDLPANLLRYLELVEEHTGVPVVLFSTSPRREDTFGAVSWV.

Residues glycine 12–lysine 18 and glycine 40–threonine 42 contribute to the GTP site. Aspartate 13 serves as the catalytic Proton acceptor. Mg(2+) contacts are provided by aspartate 13 and glycine 40. IMP-binding positions include aspartate 13–lysine 16, asparagine 38–histidine 41, threonine 121, arginine 135, glutamine 213, threonine 228, and arginine 292. The active-site Proton donor is the histidine 41. Residue threonine 288–arginine 294 participates in substrate binding. Residues arginine 294, lysine 320–aspartate 322, and serine 393–serine 395 contribute to the GTP site.

Belongs to the adenylosuccinate synthetase family. In terms of assembly, homodimer. It depends on Mg(2+) as a cofactor.

It localises to the cytoplasm. The catalysed reaction is IMP + L-aspartate + GTP = N(6)-(1,2-dicarboxyethyl)-AMP + GDP + phosphate + 2 H(+). It participates in purine metabolism; AMP biosynthesis via de novo pathway; AMP from IMP: step 1/2. Plays an important role in the de novo pathway of purine nucleotide biosynthesis. Catalyzes the first committed step in the biosynthesis of AMP from IMP. The chain is Adenylosuccinate synthetase from Thermus thermophilus (strain ATCC BAA-163 / DSM 7039 / HB27).